The sequence spans 518 residues: T-box transcription factor TBX5 (518 aa).

The disordered stretch occupies residues 1–46; the sequence is MADTDEGFGLARTPLEPDSKDRSCDSKPESALGAPSKSPSSPQAAF. Positions 15-28 are enriched in basic and acidic residues; it reads LEPDSKDRSCDSKP. Residues 34 to 45 show a composition bias toward low complexity; sequence APSKSPSSPQAA. Positions 58–238 form a DNA-binding region, T-box; it reads LHERELWLKF…NNPFAKGFRG (181 aa). 2 disordered regions span residues 254-307 and 330-352; these read EYPV…LLPP and ECSSTEHPYKKPYMETSPSEEDT. A compositionally biased stretch (polar residues) spans 269 to 301; the sequence is SNHSPFSSETRALSTSSNLGSQYQCENGVSGPS. Lysine 339 is subject to N6-acetyllysine.

As to quaternary structure, monomer. Homodimer (via the T-box); binds DNA as homodimer. Interacts (via the T-box) with NKX2-5 (via the homeobox); this complex binds DNA. Interacts with GATA4. Interacts with KAT2A and KAT2B. In terms of processing, acetylation at Lys-339 by KAT2A and KAT2B promotes nuclear retention.

Its subcellular location is the nucleus. The protein localises to the cytoplasm. Its function is as follows. DNA-binding protein that regulates the transcription of several genes and is involved in heart development and limb pattern formation. Binds to the core DNA motif of NPPA promoter. The polypeptide is T-box transcription factor TBX5 (Tbx5) (Mus musculus (Mouse)).